Consider the following 411-residue polypeptide: Class E basic helix-loop-helix protein 40 (411 aa).

A disordered region spans residues 1–21 (MERIPSAQPPPTCLPKTPGLE). The essential for interaction with BMAL1, E-box binding and repressor activity against the CLOCK-BMAL1 heterodimer stretch occupies residues 1-139 (MERIPSAQPP…LSGKNIEAGQ (139 aa)). Residues 52 to 107 (TYKLPHRLIEKKRRDRINECIAQLKDLLPEHLKLTTLGHLEKAVVLELTLKHVKAL) enclose the bHLH domain. The segment at 75–79 (LKDLL) is necessary for interaction with RXRA and repressor activity against RXRA. In terms of domain architecture, Orange spans 142–175 (FCSGFQTCAREVLQYLAKHENTRDLKSSQLVTHL). A Glycyl lysine isopeptide (Lys-Gly) (interchain with G-Cter in SUMO1, SUMO2 and SUMO3) cross-link involves residue Lys159. Lys167 participates in a covalent cross-link: Glycyl lysine isopeptide (Lys-Gly) (interchain with G-Cter in SUMO2). Positions 186–293 (SASRKPLDSA…EPPTKKSRMQ (108 aa)) are disordered. Residue Ser235 is modified to Phosphoserine. Over residues 248–271 (ELEKGDLRSEQPYFKSDHGRRFTV) the composition is skewed to basic and acidic residues. A Glycyl lysine isopeptide (Lys-Gly) (interchain with G-Cter in SUMO1); alternate cross-link involves residue Lys279. Lys279 is covalently cross-linked (Glycyl lysine isopeptide (Lys-Gly) (interchain with G-Cter in SUMO1, SUMO2 and SUMO3); alternate). Lys279 is covalently cross-linked (Glycyl lysine isopeptide (Lys-Gly) (interchain with G-Cter in SUMO2); alternate). Residue Lys288 forms a Glycyl lysine isopeptide (Lys-Gly) (interchain with G-Cter in SUMO2) linkage. Ser383 is modified (phosphoserine).

As to quaternary structure, homodimer. Heterodimer with BHLHE41/DEC2. Interacts with TCF3/E47. Interacts with ubiquitin-conjugating enzyme UBE2I/UBC9. Interacts with HDAC1, SUMO1, RXRA and BMAL1. Ubiquitinated; which may lead to proteasomal degradation. In terms of processing, sumoylation inhibits its ubiquitination and promotes its negative regulation of the CLOCK-BMAL1 heterodimer transcriptional activator activity. In terms of tissue distribution, expressed in heart, spleen, lung, liver, muscle, kidney, uterus and gut. Highly expressed in the cerebral cortex, especially in the fifth layer, thalamus, superior colliculus, olfactory bulb, piriform cortex, hippocampus and hypothalamic nuclei.

Its subcellular location is the cytoplasm. The protein resides in the nucleus. Its function is as follows. Transcriptional repressor involved in the regulation of the circadian rhythm by negatively regulating the activity of the clock genes and clock-controlled genes. Acts as the negative limb of a novel autoregulatory feedback loop (DEC loop) which differs from the one formed by the PER and CRY transcriptional repressors (PER/CRY loop). Both these loops are interlocked as it represses the expression of PER1/2 and in turn is repressed by PER1/2 and CRY1/2. Represses the activity of the circadian transcriptional activator: CLOCK-BMAL1|BMAL2 heterodimer by competing for the binding to E-box elements (5'-CACGTG-3') found within the promoters of its target genes. Negatively regulates its own expression and the expression of DBP and BHLHE41/DEC2. Acts as a corepressor of RXR and the RXR-LXR heterodimers and represses the ligand-induced RXRA and NR1H3/LXRA transactivation activity. May be involved in the regulation of chondrocyte differentiation via the cAMP pathway. Represses the transcription of NR0B2 and attentuates the transactivation of NR0B2 by the CLOCK-BMAL1 complex. Drives the circadian rhythm of blood pressure through transcriptional repression of ATP1B1 in the cardiovascular system. In Rattus norvegicus (Rat), this protein is Class E basic helix-loop-helix protein 40 (Bhlhe40).